The chain runs to 184 residues: MPQSKSRKIAILGYRSVGKSSLTIQFVEGQFVDSYDPTIENTFTKLITVNGQEYHLQLVDTAGQDEYSIFPQTYSIDINGYILVYSVTSIKSFEVIKVIHGKLLDMVGKVQIPIMLVGNKKDLHMERVISYEEGKALAESWNAAFLESSAKENQTAVDVFRRIILEAEKIDGAASQGKSSCSVM.

Lysine 8 participates in a covalent cross-link: Glycyl lysine isopeptide (Lys-Gly) (interchain with G-Cter in ubiquitin). Residues serine 16 and valine 17 each coordinate GDP. Serine 16 lines the GTP pocket. Residues glycine 18, lysine 19, serine 20, serine 21, valine 32, tyrosine 35, threonine 38, asparagine 119, and aspartate 122 each coordinate GTP. Lysine 19, serine 20, and serine 21 together coordinate GDP. Residue serine 20 coordinates Mg(2+). The Effector region signature appears at 35–43; sequence YDPTIENTF. Threonine 38 contributes to the GDP binding site. A Mg(2+)-binding site is contributed by threonine 38. Aspartate 122 is a binding site for GDP. Serine 130 is subject to Phosphoserine; by MAPKAPK5. GDP is bound at residue alanine 150. Alanine 150 contacts GTP. Cysteine 181 bears the Cysteine methyl ester mark. Cysteine 181 carries S-farnesyl cysteine lipidation. The propeptide at 182-184 is removed in mature form; sequence SVM.

Belongs to the small GTPase superfamily. Rheb family. As to quaternary structure, associates with the mTORC1 complex (MTOR, MLST8 and RPTOR) in a guanyl nucleotide-independent manner. Interacts with TSC2. Interacts with MCRS1; the interaction maintains RHEB at the lysosome in its active GTP-bound form and prevents its interaction with the mTORC1 complex inhibitor TSC2, ensuring activation of the mTORC1 complex by RHEB. Interacts (when prenylated) with PDE6D; this promotes release from membranes. In terms of processing, farnesylation is important for efficiently activating mTORC1-mediated signaling. Post-translationally, polyubiquitinated in response to amino acid, promoting its interaction with MTOR and mTORC1 activation. Deubiquitination by ATXN3 promotes recruitment of the TSC-TBC complex and RHEB inactivation by TSC2. Monoubiquitinated at Lys-8 by RNF152, promoting its association with the TSC-TBC complex. Deubiquitinated at Lys-8 by USP4, promoting mTORC1 activation. Phosphorylation by MAPKAPK5 impairs GTP-binding and inactivation. Expressed at high levels in normal adult cortex as well as a number of peripheral tissues, including lung and intestine.

It localises to the endomembrane system. It is found in the lysosome membrane. The protein localises to the golgi apparatus membrane. Its subcellular location is the endoplasmic reticulum membrane. The protein resides in the cytoplasm. It localises to the cytosol. It catalyses the reaction GTP + H2O = GDP + phosphate + H(+). Its activity is regulated as follows. Alternates between an inactive form bound to GDP and an active form bound to GTP. Inactivated by the TSC-TBC complex via the GTPase activating protein (GAP) domain of TSC2. Autoinhibited by Tyr-35, which constrains the active site conformation, restricting the access of the catalytic Asp-65 to the nucleotide-binding pocket. In terms of biological role, small GTPase that acts as an allosteric activator of the canonical mTORC1 complex, an evolutionarily conserved central nutrient sensor that stimulates anabolic reactions and macromolecule biosynthesis to promote cellular biomass generation and growth. In response to nutrients, growth factors or amino acids, specifically activates the protein kinase activity of MTOR, the catalytic component of the mTORC1 complex: acts by causing a conformational change that allows the alignment of residues in the active site of MTOR, thereby enhancing the phosphorylation of ribosomal protein S6 kinase (RPS6KB1 and RPS6KB2) and EIF4EBP1 (4E-BP1). RHEB is also required for localization of the TSC-TBC complex to lysosomal membranes. In response to starvation, RHEB is inactivated by the TSC-TBC complex, preventing activation of mTORC1. Has low intrinsic GTPase activity. This is GTP-binding protein Rheb from Rattus norvegicus (Rat).